We begin with the raw amino-acid sequence, 238 residues long: ATP-dependent Clp protease ATP-binding subunit CLPT1, chloroplastic (238 aa).

The N-terminal 64 residues, 1 to 64 (MASYTVSFIP…VPKLRCLTSA (64 aa)), are a transit peptide targeting the chloroplast. Positions 83–228 (IPKWSARAIK…KEVEKSMNED (146 aa)) constitute a Clp R domain. Repeat regions lie at residues 86–151 (WSAR…LGKS) and 163–228 (LTEP…MNED).

Belongs to the ClpA/ClpB family. In terms of assembly, monomer and homodimer. Binds to the CLP3-6 ring (P-ring). The dimers monomerize before association to the P-ring. Component of the chloroplastic Clp protease core complex which consist of at least 16 proteins: CLPP4 (3 copies), CLPP5 (3 copies), CLPR4 (2 copies), ClpP1 (1 copy), CLPP6 (1 copy), CLPR2 (1 copy), CLPT1 (1 copy), CLPT2 (1 copy) and 3 copies of CLPP3 and/or CLPR1 and/or CLPR3. Interacts with CLPC2 and CLPD. Interacts with CPN21. No interactions with CLPS1.

The protein localises to the plastid. It localises to the chloroplast. Its function is as follows. Accessory protein regulating the assembly of the plastidial Clp protease system. CLPT1 first binds to the heptameric P-ring containing the CLP3-6 subunits followed by CLPT2, and only then does the P-ring combine with the R-ring composed of the clpP1 and CLPR1-4 subunits. Once the core complex is fully assembled, it then associates to the CLPC chaperone partner to form the functional protease. CLPT1 and CLPT2 are partially redundant. This Arabidopsis thaliana (Mouse-ear cress) protein is ATP-dependent Clp protease ATP-binding subunit CLPT1, chloroplastic.